The sequence spans 371 residues: Germination protease (371 aa).

Positions 1–16 are excised as a propeptide; it reads MEKQKLDLSAYQIRTD.

Belongs to the peptidase A25 family. Homotetramer. In terms of processing, autoproteolytically processed. The inactive tetrameric zymogen termed p46 autoprocesses to a smaller form termed p41, which is active only during spore germination.

It carries out the reaction Endopeptidase action with P4 Glu or Asp, P1 preferably Glu &gt; Asp, P1' hydrophobic and P2' Ala.. Functionally, initiates the rapid degradation of small, acid-soluble proteins during spore germination. This chain is Germination protease, found in Bacillus pumilus (strain SAFR-032).